The chain runs to 368 residues: tRNA 2-selenouridine synthase (368 aa).

The Rhodanese domain occupies 15-138 (FLNQHPIMDV…MRQYLIGVIE (124 aa)). Catalysis depends on Cys98, which acts as the S-selanylcysteine intermediate.

Belongs to the SelU family. In terms of assembly, monomer.

The catalysed reaction is 5-methylaminomethyl-2-thiouridine(34) in tRNA + selenophosphate + (2E)-geranyl diphosphate + H2O + H(+) = 5-methylaminomethyl-2-selenouridine(34) in tRNA + (2E)-thiogeraniol + phosphate + diphosphate. It carries out the reaction 5-methylaminomethyl-2-thiouridine(34) in tRNA + (2E)-geranyl diphosphate = 5-methylaminomethyl-S-(2E)-geranyl-thiouridine(34) in tRNA + diphosphate. The enzyme catalyses 5-methylaminomethyl-S-(2E)-geranyl-thiouridine(34) in tRNA + selenophosphate + H(+) = 5-methylaminomethyl-2-(Se-phospho)selenouridine(34) in tRNA + (2E)-thiogeraniol. It catalyses the reaction 5-methylaminomethyl-2-(Se-phospho)selenouridine(34) in tRNA + H2O = 5-methylaminomethyl-2-selenouridine(34) in tRNA + phosphate. Its function is as follows. Involved in the post-transcriptional modification of the uridine at the wobble position (U34) of tRNA(Lys), tRNA(Glu) and tRNA(Gln). Catalyzes the conversion of 2-thiouridine (S2U-RNA) to 2-selenouridine (Se2U-RNA). Acts in a two-step process involving geranylation of 2-thiouridine (S2U) to S-geranyl-2-thiouridine (geS2U) and subsequent selenation of the latter derivative to 2-selenouridine (Se2U) in the tRNA chain. The chain is tRNA 2-selenouridine synthase from Shewanella baltica (strain OS155 / ATCC BAA-1091).